A 341-amino-acid polypeptide reads, in one-letter code: MEQDNKEQAMHQPPMDNKMLVPVSNVPVSSGNSGFHQPPATQYLPEMMRSYMASAEELRCNEREWESQLIRSLPEHGVRCPSQLAPIPFQNYCQRSIGRGSHVMPVGSSGTLGVTISFSENLMPQGGLPSSRGVSVMAHSSAPAMPYPMPPTVPATTGSLKHGILLVPGMASAGTHAVAPFMDQMLHSINPCNPEMLPARFQQLLPLDSQDSLVTESNTQEEPFVREPPTPAPEGAESPSTSRGATRRQSPVSRPYVCTYNSCGKSYTKRSHLVSHQRKHTGVKPFACDWNGCTWKFFRSDELGRHKRIHTRYRPHKCDECDREFMRSDHLRQHKRTHLPK.

The disordered stretch occupies residues 214–252 (VTESNTQEEPFVREPPTPAPEGAESPSTSRGATRRQSPV). Polar residues predominate over residues 238-252 (SPSTSRGATRRQSPV). 3 C2H2-type zinc fingers span residues 256-280 (YVCTYNSCGKSYTKRSHLVSHQRKH), 286-310 (FACDWNGCTWKFFRSDELGRHKRIH), and 316-338 (HKCDECDREFMRSDHLRQHKRTH).

This sequence belongs to the Sp1 C2H2-type zinc-finger protein family. In terms of tissue distribution, exclusively expressed in testis and ovary. Localized to step 3-8 spermatids in testis and growing oocytes in ovary.

It localises to the nucleus. Transcription repressor that binds to the promoter of target genes and prevents their expression. Acts as a negative regulator of epithelial-mesenchymal transition and metastasis in breast cancer. Specifically binds the 5'-CACCC-3' sequence in the promoter of ID1, a key metastasis regulator in breast cancer, and repress its expression. May be a germ cell-specific transcription factor that plays important roles in spermatid differentiation and oocyte development. This Mus musculus (Mouse) protein is Krueppel-like factor 17 (Klf17).